Here is a 224-residue protein sequence, read N- to C-terminus: ATP synthase subunit a (224 aa).

The next 6 helical transmembrane spans lie at 17-37 (FSLN…IYWL), 72-92 (IFIS…FPYI), 99-119 (LTLT…YGWI), 125-145 (MFAH…MVCI), 166-186 (IAGH…SYIL), and 187-207 (VTFL…VAMI).

This sequence belongs to the ATPase A chain family. As to quaternary structure, F-type ATPases have 2 components, CF(1) - the catalytic core - and CF(0) - the membrane proton channel. CF(1) has five subunits: alpha(3), beta(3), gamma(1), delta(1), epsilon(1). CF(0) has three main subunits: a, b and c.

The protein localises to the mitochondrion inner membrane. Functionally, mitochondrial membrane ATP synthase (F(1)F(0) ATP synthase or Complex V) produces ATP from ADP in the presence of a proton gradient across the membrane which is generated by electron transport complexes of the respiratory chain. F-type ATPases consist of two structural domains, F(1) - containing the extramembraneous catalytic core and F(0) - containing the membrane proton channel, linked together by a central stalk and a peripheral stalk. During catalysis, ATP synthesis in the catalytic domain of F(1) is coupled via a rotary mechanism of the central stalk subunits to proton translocation. Key component of the proton channel; it may play a direct role in the translocation of protons across the membrane. The polypeptide is ATP synthase subunit a (mt:ATPase6) (Drosophila melanogaster (Fruit fly)).